The chain runs to 345 residues: Ribosomal RNA small subunit methyltransferase C (345 aa).

This sequence belongs to the methyltransferase superfamily. RsmC family. Monomer.

The protein localises to the cytoplasm. The catalysed reaction is guanosine(1207) in 16S rRNA + S-adenosyl-L-methionine = N(2)-methylguanosine(1207) in 16S rRNA + S-adenosyl-L-homocysteine + H(+). Specifically methylates the guanine in position 1207 of 16S rRNA in the 30S particle. The sequence is that of Ribosomal RNA small subunit methyltransferase C from Shewanella denitrificans (strain OS217 / ATCC BAA-1090 / DSM 15013).